A 359-amino-acid chain; its full sequence is Epoxide hydrolase 4 (359 aa).

Residues 15–35 (ALLYWSLVYGYCGLCASVHLL) form a helical; Signal-anchor for type II membrane protein membrane-spanning segment. One can recognise an AB hydrolase-1 domain in the interval 92–337 (PLMLLLHGFP…ILSEGSHWLQ (246 aa)). The Nucleophile role is filled by D167. The active-site Proton donor is the Y279. H334 acts as the Proton acceptor in catalysis.

This sequence belongs to the AB hydrolase superfamily. Epoxide hydrolase family.

It is found in the membrane. In Mus musculus (Mouse), this protein is Epoxide hydrolase 4 (Ephx4).